The sequence spans 90 residues: Small ribosomal subunit protein uS15 (90 aa).

The protein belongs to the universal ribosomal protein uS15 family. Part of the 30S ribosomal subunit. Forms a bridge to the 50S subunit in the 70S ribosome, contacting the 23S rRNA.

One of the primary rRNA binding proteins, it binds directly to 16S rRNA where it helps nucleate assembly of the platform of the 30S subunit by binding and bridging several RNA helices of the 16S rRNA. Its function is as follows. Forms an intersubunit bridge (bridge B4) with the 23S rRNA of the 50S subunit in the ribosome. The sequence is that of Small ribosomal subunit protein uS15 from Campylobacter concisus (strain 13826).